A 192-amino-acid chain; its full sequence is Thymidine kinase (192 aa).

Residues 9-16 (SAMNAGKS) and 87-90 (DECQ) contribute to the ATP site. Glu88 acts as the Proton acceptor in catalysis. The Zn(2+) site is built by Cys145, Cys147, Cys182, and His185.

Belongs to the thymidine kinase family. Homotetramer.

The protein resides in the cytoplasm. It catalyses the reaction thymidine + ATP = dTMP + ADP + H(+). The sequence is that of Thymidine kinase from Vibrio parahaemolyticus serotype O3:K6 (strain RIMD 2210633).